A 208-amino-acid polypeptide reads, in one-letter code: Uracil phosphoribosyltransferase (208 aa).

Residues R78, R103, and 130–138 (DPMLATGGS) contribute to the 5-phospho-alpha-D-ribose 1-diphosphate site. Residues I193 and 198–200 (GDA) contribute to the uracil site. D199 is a binding site for 5-phospho-alpha-D-ribose 1-diphosphate.

It belongs to the UPRTase family. It depends on Mg(2+) as a cofactor.

The catalysed reaction is UMP + diphosphate = 5-phospho-alpha-D-ribose 1-diphosphate + uracil. The protein operates within pyrimidine metabolism; UMP biosynthesis via salvage pathway; UMP from uracil: step 1/1. Its activity is regulated as follows. Allosterically activated by GTP. Functionally, catalyzes the conversion of uracil and 5-phospho-alpha-D-ribose 1-diphosphate (PRPP) to UMP and diphosphate. The polypeptide is Uracil phosphoribosyltransferase (Pectobacterium atrosepticum (strain SCRI 1043 / ATCC BAA-672) (Erwinia carotovora subsp. atroseptica)).